Consider the following 51-residue polypeptide: Small ribosomal subunit protein eS31 (51 aa).

Residues C22, C25, C40, and C43 each coordinate Zn(2+). The C4-type zinc finger occupies 22–43 (CVRCSHGIFMADHGDRYACGRC).

The protein belongs to the eukaryotic ribosomal protein eS31 family. Part of the 30S ribosomal subunit. Requires Zn(2+) as cofactor.

The sequence is that of Small ribosomal subunit protein eS31 from Methanosphaera stadtmanae (strain ATCC 43021 / DSM 3091 / JCM 11832 / MCB-3).